The primary structure comprises 278 residues: 4-hydroxy-3-methylbut-2-enyl diphosphate reductase (278 aa).

C12 provides a ligand contact to [4Fe-4S] cluster. The (2E)-4-hydroxy-3-methylbut-2-enyl diphosphate site is built by H40 and H75. H40 and H75 together coordinate dimethylallyl diphosphate. The isopentenyl diphosphate site is built by H40 and H75. Residue C97 coordinates [4Fe-4S] cluster. Residue H125 coordinates (2E)-4-hydroxy-3-methylbut-2-enyl diphosphate. H125 provides a ligand contact to dimethylallyl diphosphate. H125 lines the isopentenyl diphosphate pocket. The Proton donor role is filled by E127. (2E)-4-hydroxy-3-methylbut-2-enyl diphosphate is bound at residue T157. C187 provides a ligand contact to [4Fe-4S] cluster. The (2E)-4-hydroxy-3-methylbut-2-enyl diphosphate site is built by S215, S216, N217, and S258. Dimethylallyl diphosphate is bound by residues S215, S216, N217, and S258. Isopentenyl diphosphate-binding residues include S215, S216, N217, and S258.

Belongs to the IspH family. [4Fe-4S] cluster serves as cofactor.

The enzyme catalyses isopentenyl diphosphate + 2 oxidized [2Fe-2S]-[ferredoxin] + H2O = (2E)-4-hydroxy-3-methylbut-2-enyl diphosphate + 2 reduced [2Fe-2S]-[ferredoxin] + 2 H(+). It catalyses the reaction dimethylallyl diphosphate + 2 oxidized [2Fe-2S]-[ferredoxin] + H2O = (2E)-4-hydroxy-3-methylbut-2-enyl diphosphate + 2 reduced [2Fe-2S]-[ferredoxin] + 2 H(+). The protein operates within isoprenoid biosynthesis; dimethylallyl diphosphate biosynthesis; dimethylallyl diphosphate from (2E)-4-hydroxy-3-methylbutenyl diphosphate: step 1/1. It functions in the pathway isoprenoid biosynthesis; isopentenyl diphosphate biosynthesis via DXP pathway; isopentenyl diphosphate from 1-deoxy-D-xylulose 5-phosphate: step 6/6. In terms of biological role, catalyzes the conversion of 1-hydroxy-2-methyl-2-(E)-butenyl 4-diphosphate (HMBPP) into a mixture of isopentenyl diphosphate (IPP) and dimethylallyl diphosphate (DMAPP). Acts in the terminal step of the DOXP/MEP pathway for isoprenoid precursor biosynthesis. In Pseudothermotoga lettingae (strain ATCC BAA-301 / DSM 14385 / NBRC 107922 / TMO) (Thermotoga lettingae), this protein is 4-hydroxy-3-methylbut-2-enyl diphosphate reductase.